Reading from the N-terminus, the 151-residue chain is Large ribosomal subunit protein bL9 (151 aa).

It belongs to the bacterial ribosomal protein bL9 family.

Binds to the 23S rRNA. This chain is Large ribosomal subunit protein bL9, found in Lactobacillus johnsonii (strain CNCM I-12250 / La1 / NCC 533).